A 428-amino-acid chain; its full sequence is Glycine reductase complex component B subunits alpha and beta (428 aa).

Cys242 serves as the catalytic Schiff-base intermediate with substrate; via pyruvic acid. The residue at position 242 (Cys242) is a Pyruvic acid (Cys).

As to quaternary structure, heterohexamer of two alpha, two beta and two gamma subunits. Component of the glycine reductase complex, together with components A and C. PB is substrate specific. The peptide chain is cleaved into beta and alpha chains, and the alpha chain N-terminal cysteine is deaminated and oxidized to form a reactive pyruvoyl group.

The catalysed reaction is acetyl phosphate + [thioredoxin]-disulfide + NH4(+) + H2O = [thioredoxin]-dithiol + glycine + phosphate + H(+). In the first step of glycine reductase, the substrate is bound to component PB via a Schiff base intermediate. Then the PB-activated substrate is nucleophilically attacked by the selenol anion of component PA to transform it to a carboxymethylated selenoether and the respective amine. By action of component PC, acetyl phosphate is formed, leaving component PA in its oxidized state. Finally component PA becomes reduced by the thioredoxin system to start a new catalytic cycle of reductive deamination. The sequence is that of Glycine reductase complex component B subunits alpha and beta (grdE) from Peptoclostridium acidaminophilum (Eubacterium acidaminophilum).